A 177-amino-acid polypeptide reads, in one-letter code: Large ribosomal subunit protein uL16 (177 aa).

The protein belongs to the universal ribosomal protein uL16 family.

This chain is Large ribosomal subunit protein uL16, found in Natronomonas pharaonis (strain ATCC 35678 / DSM 2160 / CIP 103997 / JCM 8858 / NBRC 14720 / NCIMB 2260 / Gabara) (Halobacterium pharaonis).